Here is a 210-residue protein sequence, read N- to C-terminus: Large ribosomal subunit protein uL3 (210 aa).

Belongs to the universal ribosomal protein uL3 family. Part of the 50S ribosomal subunit. Forms a cluster with proteins L14 and L19.

In terms of biological role, one of the primary rRNA binding proteins, it binds directly near the 3'-end of the 23S rRNA, where it nucleates assembly of the 50S subunit. In Syntrophotalea carbinolica (strain DSM 2380 / NBRC 103641 / GraBd1) (Pelobacter carbinolicus), this protein is Large ribosomal subunit protein uL3.